The following is a 633-amino-acid chain: Laccase ARB_05828 (633 aa).

The N-terminal stretch at 1–16 (MKRLGLAALYIGSALA) is a signal peptide. A propeptide spanning residues 22–47 (GPPSRNVPRDDFPMFNPLPSTDLNTR) is cleaved from the precursor. Residue Asn143 is glycosylated (N-linked (GlcNAc...) asparagine). The Cu cation site is built by His148, His150, His192, and His194. A disulfide bridge links Cys169 with Cys607. In terms of domain architecture, Plastocyanin-like spans 224–353 (LLMTDHLHSS…GRYWVRTTPA (130 aa)). Asn286 and Asn456 each carry an N-linked (GlcNAc...) asparagine glycan. Residues His508, His511, His513, His568, Cys569, His570, and His574 each coordinate Cu cation.

It belongs to the multicopper oxidase family. In terms of assembly, monomer. Cu cation serves as cofactor.

The protein localises to the secreted. It carries out the reaction 4 hydroquinone + O2 = 4 benzosemiquinone + 2 H2O. This is Laccase ARB_05828 from Arthroderma benhamiae (strain ATCC MYA-4681 / CBS 112371) (Trichophyton mentagrophytes).